The chain runs to 22 residues: Peroxidase 5 (22 aa).

This sequence belongs to the peroxidase family. Classical plant (class III) peroxidase subfamily. Heme b is required as a cofactor. Ca(2+) serves as cofactor.

Its subcellular location is the secreted. The protein localises to the cell wall. The catalysed reaction is 2 a phenolic donor + H2O2 = 2 a phenolic radical donor + 2 H2O. Functionally, removal of H(2)O(2), oxidation of toxic reductants, biosynthesis and degradation of lignin, suberization, auxin catabolism, response to environmental stresses such as wounding, pathogen attack and oxidative stress. These functions might be dependent on each isozyme/isoform in each plant tissue. This chain is Peroxidase 5, found in Cycas revoluta (Sago palm).